Consider the following 414-residue polypeptide: Enterobactin exporter EntS (414 aa).

Residues 1–21 (MNRQSWLLNLSLLKTHPAFRA) are Cytoplasmic-facing. The helical transmembrane segment at 22–42 (VFLARFISIVSLGLLGVAVPV) threads the bilayer. Topologically, residues 43–55 (QIQMMTHSTWQVG) are periplasmic. The chain crosses the membrane as a helical span at residues 56–76 (LSVTLTGGAMFIGLMVGGVLA). Over 77 to 83 (DRYERKK) the chain is Cytoplasmic. Residues 84 to 104 (VILLARGTCGIGFIGLCVNAL) form a helical membrane-spanning segment. The Periplasmic segment spans residues 105–109 (LPEPS). The chain crosses the membrane as a helical span at residues 110 to 130 (LLAIYLLGLWDGFFASLGVTA). Residues 131 to 156 (LLAATPALVGRENLMQAGAITMLTVR) lie on the Cytoplasmic side of the membrane. The helical transmembrane segment at 157-177 (LGSVISPMLGGILLASGGVAW) threads the bilayer. A topological domain (periplasmic) is located at residue asparagine 178. The chain crosses the membrane as a helical span at residues 179–199 (YGLAAAGTFITLLPLLTLPRL). Residues 200–218 (PVPPQPRENPFIALLAAFR) lie on the Cytoplasmic side of the membrane. Residues 219 to 239 (FLLASPLIGGIALLGGLVTMA) form a helical membrane-spanning segment. Residues 240 to 256 (SAVRVLYPALAMSWQMS) are Periplasmic-facing. A helical transmembrane segment spans residues 257-277 (AAQIGLLYAAIPLGAAIGALT). Residues 278-287 (SGQLAHSVRP) are Cytoplasmic-facing. A helical membrane pass occupies residues 288–307 (GLIMLVSTVGSFLAVGLFAI). Topologically, residues 308–313 (MPIWIA) are periplasmic. Residues 314–336 (GVICLALFGWLSAISSLLQYTLL) traverse the membrane as a helical segment. Topologically, residues 337–356 (QTQTPENMLGRMNGLWTAQN) are cytoplasmic. Residues 357–377 (VTGDAIGAALLGGLGAMMTPV) form a helical membrane-spanning segment. Position 378 (alanine 378) is a topological domain, periplasmic. The chain crosses the membrane as a helical span at residues 379–399 (SASVSGFGLVIIGLLLLLVLG). Residues 400–414 (ELRRFRQTPPVSDAG) lie on the Cytoplasmic side of the membrane.

Belongs to the major facilitator superfamily. EntS (TC 2.A.1.38) family.

The protein localises to the cell inner membrane. Functionally, component of an export pathway for enterobactin. The protein is Enterobactin exporter EntS of Salmonella typhi.